The primary structure comprises 276 residues: MPELPEVETLKNSLKDKLIELIIENVELKRDNLRYKLSPLLASEISNTNILDVRRRAKYLIIDFNNDYSLIVHLGMSGRFTLQPSNYETKKHDHVIFDLSNGEKLIFNDTRRFGMIYNFKTNFLEKELFNNLGVEPLSDSLTLEYLKSKLITRKIPIKNLIMDNRIIVGVGNIYASESLYLARIHPDKLGSNLRDDEIESLIKSIREVLAKAITAGGTTLKDFVNGDNKPGYFTQQLTVYGRERQNCLNCSSTIIKTKHSGRSTFYCRTCQYSEFT.

Pro2 acts as the Schiff-base intermediate with DNA in catalysis. Glu3 acts as the Proton donor in catalysis. The active-site Proton donor; for beta-elimination activity is Lys58. DNA is bound by residues His92, Arg111, and Arg153. An FPG-type zinc finger spans residues 238–272 (TVYGRERQNCLNCSSTIIKTKHSGRSTFYCRTCQY). Arg262 serves as the catalytic Proton donor; for delta-elimination activity.

It belongs to the FPG family. In terms of assembly, monomer. The cofactor is Zn(2+).

It catalyses the reaction Hydrolysis of DNA containing ring-opened 7-methylguanine residues, releasing 2,6-diamino-4-hydroxy-5-(N-methyl)formamidopyrimidine.. It carries out the reaction 2'-deoxyribonucleotide-(2'-deoxyribose 5'-phosphate)-2'-deoxyribonucleotide-DNA = a 3'-end 2'-deoxyribonucleotide-(2,3-dehydro-2,3-deoxyribose 5'-phosphate)-DNA + a 5'-end 5'-phospho-2'-deoxyribonucleoside-DNA + H(+). Involved in base excision repair of DNA damaged by oxidation or by mutagenic agents. Acts as a DNA glycosylase that recognizes and removes damaged bases. Has a preference for oxidized purines, such as 7,8-dihydro-8-oxoguanine (8-oxoG). Has AP (apurinic/apyrimidinic) lyase activity and introduces nicks in the DNA strand. Cleaves the DNA backbone by beta-delta elimination to generate a single-strand break at the site of the removed base with both 3'- and 5'-phosphates. The sequence is that of Formamidopyrimidine-DNA glycosylase from Rickettsia felis (strain ATCC VR-1525 / URRWXCal2) (Rickettsia azadi).